Here is an 807-residue protein sequence, read N- to C-terminus: Hyaluronate lyase (807 aa).

The first 40 residues, 1–40, serve as a signal peptide directing secretion; that stretch reads MTYRIKKWQKLSTITLLMAGVITLNGGEFRSVDKHQIAVA. Catalysis depends on residues asparagine 241, histidine 297, and tyrosine 306.

This sequence belongs to the polysaccharide lyase 8 family.

It localises to the secreted. It catalyses the reaction [hyaluronan](n) = n 3-(4-deoxy-beta-D-gluc-4-enuronosyl)-N-acetyl-D-glucosamine + H2O. The chain is Hyaluronate lyase from Staphylococcus aureus (strain NCTC 8325 / PS 47).